The chain runs to 164 residues: NADH-quinone oxidoreductase subunit I (164 aa).

4Fe-4S ferredoxin-type domains follow at residues 55-85 (LRRYPNGEERCIACKLCEAICPAQAITIDAE) and 95-124 (TRYDIDMTKCIYCGFCQEACPVDAIVEGPN). Residues Cys65, Cys68, Cys71, Cys75, Cys104, Cys107, Cys110, and Cys114 each contribute to the [4Fe-4S] cluster site.

The protein belongs to the complex I 23 kDa subunit family. As to quaternary structure, NDH-1 is composed of 14 different subunits. Subunits NuoA, H, J, K, L, M, N constitute the membrane sector of the complex. [4Fe-4S] cluster is required as a cofactor.

The protein resides in the cell inner membrane. It carries out the reaction a quinone + NADH + 5 H(+)(in) = a quinol + NAD(+) + 4 H(+)(out). Its function is as follows. NDH-1 shuttles electrons from NADH, via FMN and iron-sulfur (Fe-S) centers, to quinones in the respiratory chain. The immediate electron acceptor for the enzyme in this species is believed to be ubiquinone. Couples the redox reaction to proton translocation (for every two electrons transferred, four hydrogen ions are translocated across the cytoplasmic membrane), and thus conserves the redox energy in a proton gradient. This is NADH-quinone oxidoreductase subunit I from Ruegeria pomeroyi (strain ATCC 700808 / DSM 15171 / DSS-3) (Silicibacter pomeroyi).